The chain runs to 296 residues: 4-hydroxy-tetrahydrodipicolinate synthase (296 aa).

Pyruvate is bound at residue Thr47. Tyr135 acts as the Proton donor/acceptor in catalysis. The active-site Schiff-base intermediate with substrate is Lys164. Position 207 (Ile207) interacts with pyruvate.

The protein belongs to the DapA family. As to quaternary structure, homotetramer; dimer of dimers.

The protein localises to the cytoplasm. It catalyses the reaction L-aspartate 4-semialdehyde + pyruvate = (2S,4S)-4-hydroxy-2,3,4,5-tetrahydrodipicolinate + H2O + H(+). It participates in amino-acid biosynthesis; L-lysine biosynthesis via DAP pathway; (S)-tetrahydrodipicolinate from L-aspartate: step 3/4. Its function is as follows. Catalyzes the condensation of (S)-aspartate-beta-semialdehyde [(S)-ASA] and pyruvate to 4-hydroxy-tetrahydrodipicolinate (HTPA). The chain is 4-hydroxy-tetrahydrodipicolinate synthase from Karelsulcia muelleri (strain GWSS) (Sulcia muelleri).